The sequence spans 765 residues: ATP-dependent RNA helicase DBP4 (765 aa).

A Q motif motif is present at residues 48–76 (SQFSDLPITENTLKGLKEATFVSLTDIQK). Residues 79 to 253 (IPIALKGEDL…RLSLTNPNKI (175 aa)) enclose the Helicase ATP-binding domain. 92-99 (ARTGSGKT) contributes to the ATP binding site. The short motif at 201 to 204 (DEAD) is the DEAD box element. In terms of domain architecture, Helicase C-terminal spans 267–439 (SLEQYYVKVP…SIRPQLQSLC (173 aa)). Basic and acidic residues-rich tracts occupy residues 655 to 668 (KISDITDKEVERQK) and 720 to 738 (PVSKKPKWFEGGDDDKSKN). Residues 655-765 (KISDITDKEV…ESLTARLIGN (111 aa)) are disordered. The span at 744-756 (VEYDEPETLEDLE) shows a compositional bias: acidic residues.

This sequence belongs to the DEAD box helicase family. DDX10/DBP4 subfamily. As to quaternary structure, interacts with the U3 and U14 snoRNAs. Associates with pre-ribosomal complexes.

The protein localises to the nucleus. Its subcellular location is the nucleolus. The catalysed reaction is ATP + H2O = ADP + phosphate + H(+). Its function is as follows. ATP-dependent RNA helicase required for ribosome biogenesis. Involved in the release of U14 snoRNA in pre-ribosomal complexes. Required for pre-rRNA cleavage at site A2. The protein is ATP-dependent RNA helicase DBP4 (DBP4) of Candida albicans (strain SC5314 / ATCC MYA-2876) (Yeast).